The chain runs to 128 residues: Large ribosomal subunit protein bL12 (128 aa).

It belongs to the bacterial ribosomal protein bL12 family. Homodimer. Part of the ribosomal stalk of the 50S ribosomal subunit. Forms a multimeric L10(L12)X complex, where L10 forms an elongated spine to which 2 to 4 L12 dimers bind in a sequential fashion. Binds GTP-bound translation factors.

Its function is as follows. Forms part of the ribosomal stalk which helps the ribosome interact with GTP-bound translation factors. Is thus essential for accurate translation. The chain is Large ribosomal subunit protein bL12 from Methylobacillus flagellatus (strain ATCC 51484 / DSM 6875 / VKM B-1610 / KT).